Reading from the N-terminus, the 222-residue chain is N-(5'-phosphoribosyl)anthranilate isomerase (222 aa).

This sequence belongs to the TrpF family.

It carries out the reaction N-(5-phospho-beta-D-ribosyl)anthranilate = 1-(2-carboxyphenylamino)-1-deoxy-D-ribulose 5-phosphate. It participates in amino-acid biosynthesis; L-tryptophan biosynthesis; L-tryptophan from chorismate: step 3/5. This Rhizobium leguminosarum bv. trifolii (strain WSM2304) protein is N-(5'-phosphoribosyl)anthranilate isomerase.